A 160-amino-acid polypeptide reads, in one-letter code: Cyclic pyranopterin monophosphate synthase (160 aa).

Residues 74 to 76 (LSH) and 112 to 113 (ME) each bind substrate. The active site involves Asp127.

Belongs to the MoaC family. In terms of assembly, homohexamer; trimer of dimers.

It carries out the reaction (8S)-3',8-cyclo-7,8-dihydroguanosine 5'-triphosphate = cyclic pyranopterin phosphate + diphosphate. Its pathway is cofactor biosynthesis; molybdopterin biosynthesis. In terms of biological role, catalyzes the conversion of (8S)-3',8-cyclo-7,8-dihydroguanosine 5'-triphosphate to cyclic pyranopterin monophosphate (cPMP). This Geobacter metallireducens (strain ATCC 53774 / DSM 7210 / GS-15) protein is Cyclic pyranopterin monophosphate synthase.